A 201-amino-acid polypeptide reads, in one-letter code: L(+)-tartrate dehydratase subunit beta (201 aa).

The active site involves histidine 37.

This sequence belongs to the class-I fumarase family. As to quaternary structure, heterotetramer of two alpha and two beta subunits.

It catalyses the reaction (2R,3R)-tartrate = oxaloacetate + H2O. This is L(+)-tartrate dehydratase subunit beta (ttdB) from Shigella sonnei (strain Ss046).